We begin with the raw amino-acid sequence, 61 residues long: Delta-actitoxin-Avd2c (61 aa).

An N-terminal signal peptide occupies residues 1–20 (MMNRLLVFLMLGAFMLVVSA). A propeptide spanning residues 21–31 (NDAYGGDESLG) is cleaved from the precursor. Disulfide bonds link C36-C51, C37-C45, and C39-C56.

Belongs to the sea anemone short toxin (type III) family.

It is found in the secreted. The protein resides in the nematocyst. Functionally, sodium channel inhibitor. 5 uM completely inhibits voltage-gated sodium channel (Nav) inactivation. The chain is Delta-actitoxin-Avd2c from Anemonia viridis (Snakelocks anemone).